Here is a 136-residue protein sequence, read N- to C-terminus: Sec-independent protein translocase protein TatB (136 aa).

Residues 1-21 (MFDIGFPELALVAVIGLLVLG) form a helical membrane-spanning segment. The tract at residues 89 to 136 (YEDMVEKNPATPMSSKASTPQTPSSGPDPQPVESHSHSDDASKQHDRS) is disordered. Positions 99-115 (TPMSSKASTPQTPSSGP) are enriched in polar residues. Residues 122 to 136 (SHSHSDDASKQHDRS) are compositionally biased toward basic and acidic residues.

Belongs to the TatB family. The Tat system comprises two distinct complexes: a TatABC complex, containing multiple copies of TatA, TatB and TatC subunits, and a separate TatA complex, containing only TatA subunits. Substrates initially bind to the TatABC complex, which probably triggers association of the separate TatA complex to form the active translocon.

Its subcellular location is the cell inner membrane. In terms of biological role, part of the twin-arginine translocation (Tat) system that transports large folded proteins containing a characteristic twin-arginine motif in their signal peptide across membranes. Together with TatC, TatB is part of a receptor directly interacting with Tat signal peptides. TatB may form an oligomeric binding site that transiently accommodates folded Tat precursor proteins before their translocation. The chain is Sec-independent protein translocase protein TatB from Hahella chejuensis (strain KCTC 2396).